Consider the following 339-residue polypeptide: Large ribosomal subunit protein uL10 (339 aa).

The tract at residues 305–339 (TQPQQEEKVEEAEEEEEEEEASEEDALAGLGALFG) is disordered. The span at 312–330 (KVEEAEEEEEEEEASEEDA) shows a compositional bias: acidic residues.

This sequence belongs to the universal ribosomal protein uL10 family. Part of the 50S ribosomal subunit. Forms part of the ribosomal stalk which helps the ribosome interact with GTP-bound translation factors. Forms a heptameric L10(L12)2(L12)2(L12)2 complex, where L10 forms an elongated spine to which the L12 dimers bind in a sequential fashion.

Its function is as follows. Forms part of the ribosomal stalk, playing a central role in the interaction of the ribosome with GTP-bound translation factors. The protein is Large ribosomal subunit protein uL10 of Thermococcus onnurineus (strain NA1).